Reading from the N-terminus, the 302-residue chain is Glycine--tRNA ligase alpha subunit (302 aa).

This sequence belongs to the class-II aminoacyl-tRNA synthetase family. Tetramer of two alpha and two beta subunits.

Its subcellular location is the cytoplasm. The enzyme catalyses tRNA(Gly) + glycine + ATP = glycyl-tRNA(Gly) + AMP + diphosphate. The polypeptide is Glycine--tRNA ligase alpha subunit (Haemophilus influenzae (strain 86-028NP)).